We begin with the raw amino-acid sequence, 327 residues long: Zinc transport protein ZntB (327 aa).

Over 1 to 273 (MEAIKGSDVN…ARRTYTMSLM (273 aa)) the chain is Cytoplasmic. The chain crosses the membrane as a helical span at residues 274–294 (AMVFLPSTFLTGLFGVNLGGI). Over 295-300 (PGGGWR) the chain is Periplasmic. A helical membrane pass occupies residues 301–321 (FGFSLFCILLVVLIGGVTLWL). Topologically, residues 322–327 (HRSKWL) are cytoplasmic.

Belongs to the CorA metal ion transporter (MIT) (TC 1.A.35) family.

Its subcellular location is the cell inner membrane. It carries out the reaction Zn(2+)(out) + H(+)(out) = Zn(2+)(in) + H(+)(in). In terms of biological role, zinc transporter. Acts as a Zn(2+):proton symporter, which likely mediates zinc ion uptake. This chain is Zinc transport protein ZntB, found in Salmonella choleraesuis (strain SC-B67).